Here is a 236-residue protein sequence, read N- to C-terminus: Small ribosomal subunit protein uS3 (236 aa).

Residues isoleucine 39–arginine 107 enclose the KH type-2 domain. Residues alanine 214–alanine 236 form a disordered region.

This sequence belongs to the universal ribosomal protein uS3 family. As to quaternary structure, part of the 30S ribosomal subunit. Forms a tight complex with proteins S10 and S14.

Its function is as follows. Binds the lower part of the 30S subunit head. Binds mRNA in the 70S ribosome, positioning it for translation. This is Small ribosomal subunit protein uS3 from Brucella canis (strain ATCC 23365 / NCTC 10854 / RM-666).